We begin with the raw amino-acid sequence, 973 residues long: Translation initiation factor IF-2 (973 aa).

Residues 52-388 (PDQEEVKPAA…QAQKPAQPLE (337 aa)) are disordered. Basic and acidic residues-rich tracts occupy residues 83 to 120 (ESRK…DHYK), 128 to 148 (VPSR…DKAR), 157 to 172 (QGAR…ERTR), 186 to 202 (VQQE…RPPF), 210 to 246 (PQHE…DKGA), 272 to 288 (RAGE…ETKP), 314 to 333 (LLDD…EKQK), and 343 to 360 (KSRE…ERLR). The segment covering 374 to 386 (AKPQEQAQKPAQP) has biased composition (low complexity). The region spanning 472 to 641 (DRPCVVTVMG…LLVAEMSELK (170 aa)) is the tr-type G domain. A G1 region spans residues 481-488 (GHVDHGKT). A GTP-binding site is contributed by 481-488 (GHVDHGKT). Residues 506–510 (GITQH) form a G2 region. Residues 527 to 530 (DTPG) form a G3 region. Residues 527–531 (DTPGH) and 581–584 (NKID) contribute to the GTP site. The segment at 581 to 584 (NKID) is G4. The G5 stretch occupies residues 617–619 (SAL).

This sequence belongs to the TRAFAC class translation factor GTPase superfamily. Classic translation factor GTPase family. IF-2 subfamily.

The protein localises to the cytoplasm. One of the essential components for the initiation of protein synthesis. Protects formylmethionyl-tRNA from spontaneous hydrolysis and promotes its binding to the 30S ribosomal subunits. Also involved in the hydrolysis of GTP during the formation of the 70S ribosomal complex. This is Translation initiation factor IF-2 from Pelotomaculum thermopropionicum (strain DSM 13744 / JCM 10971 / SI).